The primary structure comprises 96 residues: Co-chaperonin GroES (96 aa).

This sequence belongs to the GroES chaperonin family. As to quaternary structure, heptamer of 7 subunits arranged in a ring. Interacts with the chaperonin GroEL.

It is found in the cytoplasm. Its function is as follows. Together with the chaperonin GroEL, plays an essential role in assisting protein folding. The GroEL-GroES system forms a nano-cage that allows encapsulation of the non-native substrate proteins and provides a physical environment optimized to promote and accelerate protein folding. GroES binds to the apical surface of the GroEL ring, thereby capping the opening of the GroEL channel. The protein is Co-chaperonin GroES of Nitrosospira multiformis (strain ATCC 25196 / NCIMB 11849 / C 71).